A 408-amino-acid polypeptide reads, in one-letter code: Sporulation integral membrane protein YlbJ (408 aa).

A run of 8 helical transmembrane segments spans residues 6-26 (INTL…ISHP), 43-63 (VVFP…GFGI), 81-101 (VPGV…PAGA), 131-151 (LFIF…GILL), 214-234 (VTSS…FSVF), 294-314 (IIVS…VAGI), 324-344 (PFFI…MLLW), and 377-397 (LLVQ…IIIF).

It localises to the cell membrane. Required for spore cortex formation. The sequence is that of Sporulation integral membrane protein YlbJ (ylbJ) from Bacillus subtilis (strain 168).